The chain runs to 428 residues: MAKTSKFTQTLLASALAVVAGSASAAAFQLAEVSTSGLGRAYAGEAAIADNAAVVATNPALMSLLKQPEISVGAIYVDPNINLTSPMPGFAYKNIAPNALVPTVYGVYPINEKFAVGGGLNVNYGLATEFDDKYAGGFLGGKTDLTAINFNLSGAYRVTEKFSVGLGLNAVHAKAKLERYAGVALKLKVPNVAQLAALPANTVISKLQGDKWGFGWNAGLVYEFNERNRIGIAYHSQVDINFKGQYSNHFPLAAAALLQTKGITATGGKEIPGTLHLPLPAYWEISGYHKMTDRFAMHYSYKYTQWSKFKELRAKGTDGKTLFSKTEEFRDSSRIALGASYDVTDALTVRTGIAYDESAADEHNTISIPDTDRTWFSVGATYRFTPNVSIDAGFAHLKGKKNTFKEEGVPFTSKASANLYGLNVNYRF.

The first 25 residues, 1 to 25 (MAKTSKFTQTLLASALAVVAGSASA), serve as a signal peptide directing secretion.

It belongs to the OmpP1/FadL family.

The protein localises to the cell outer membrane. The chain is 47 kDa outer membrane protein from Pasteurella multocida (strain Pm70).